Here is a 430-residue protein sequence, read N- to C-terminus: 3-deoxy-D-manno-octulosonic acid transferase (430 aa).

A helical; Signal-anchor transmembrane segment spans residues 12–32 (AFLVAAFLAAAPRIFYKVVFH). Glutamate 66 acts as the Proton acceptor in catalysis. CMP-binding positions include 274–275 (PR), 314–316 (MGI), and 341–344 (NLLE).

This sequence belongs to the glycosyltransferase group 1 family. Glycosyltransferase 30 subfamily.

It localises to the cell inner membrane. It carries out the reaction lipid IVA (E. coli) + CMP-3-deoxy-beta-D-manno-octulosonate = alpha-Kdo-(2-&gt;6)-lipid IVA (E. coli) + CMP + H(+). It catalyses the reaction alpha-Kdo-(2-&gt;6)-lipid IVA (E. coli) + CMP-3-deoxy-beta-D-manno-octulosonate = alpha-Kdo-(2-&gt;4)-alpha-Kdo-(2-&gt;6)-lipid IVA (E. coli) + CMP + H(+). The enzyme catalyses alpha-Kdo-(2-&gt;4)-alpha-Kdo-(2-&gt;6)-lipid IVA (E. coli) + CMP-3-deoxy-beta-D-manno-octulosonate = alpha-Kdo-(2-&gt;8)-alpha-Kdo-(2-&gt;4)-alpha-Kdo-(2-&gt;6)-lipid IVA (E. coli) + CMP + H(+). It participates in bacterial outer membrane biogenesis; LPS core biosynthesis. Involved in lipopolysaccharide (LPS) biosynthesis. Catalyzes the transfer of three 3-deoxy-D-manno-octulosonate (Kdo) residues from CMP-Kdo to lipid IV(A), the tetraacyldisaccharide-1,4'-bisphosphate precursor of lipid A. Thus generates the genus-specific LPS epitope of Chlamydia, composed of the trisaccharide alpha-Kdo-(2-&gt;8)-alpha-Kdo-(2-&gt;4)-alpha-Kdo. The chain is 3-deoxy-D-manno-octulosonic acid transferase (waaA) from Chlamydia muridarum (strain MoPn / Nigg).